The following is a 777-amino-acid chain: Protein translocase subunit SecA (777 aa).

Residues Gln-94, 112–116, and Asp-501 each bind ATP; that span reads GEGKT.

It belongs to the SecA family. In terms of assembly, monomer and homodimer. Part of the essential Sec protein translocation apparatus which comprises SecA, SecYEG and auxiliary proteins SecDF. Other proteins may also be involved.

Its subcellular location is the cell membrane. The protein localises to the cytoplasm. It carries out the reaction ATP + H2O + cellular proteinSide 1 = ADP + phosphate + cellular proteinSide 2.. Functionally, part of the Sec protein translocase complex. Interacts with the SecYEG preprotein conducting channel. Has a central role in coupling the hydrolysis of ATP to the transfer of proteins into and across the cell membrane, serving as an ATP-driven molecular motor driving the stepwise translocation of polypeptide chains across the membrane. The protein is Protein translocase subunit SecA of Mycobacterium avium (strain 104).